Here is a 453-residue protein sequence, read N- to C-terminus: Indoleamine 2,3-dioxygenase (453 aa).

His-331 contacts heme.

The protein belongs to the indoleamine 2,3-dioxygenase family. Requires heme as cofactor.

It catalyses the reaction D-tryptophan + O2 = N-formyl-D-kynurenine. The catalysed reaction is L-tryptophan + O2 = N-formyl-L-kynurenine. It participates in cofactor biosynthesis; NAD(+) biosynthesis. In terms of biological role, catalyzes the first step in tryptophan catabolism in order to supply de novo nicotinamide adenine dinucleotide (NAD(+)) via the kynurenine pathway. Plays a role in the cellular response to telomere uncapping. This is Indoleamine 2,3-dioxygenase (BNA2) from Saccharomyces cerevisiae (strain ATCC 204508 / S288c) (Baker's yeast).